The following is an 86-amino-acid chain: Omega-theraphotoxin-Hhn1d (86 aa).

The first 21 residues, 1–21 (MKSIVFVALFGLALLAVVCSA), serve as a signal peptide directing secretion. A propeptide spanning residues 22–50 (SEDAHKELLKEVVRAMVVDKTDAVQAEER) is cleaved from the precursor. 3 disulfide bridges follow: cysteine 52–cysteine 66, cysteine 59–cysteine 71, and cysteine 65–cysteine 78.

Belongs to the neurotoxin 10 (Hwtx-1) family. 17 (Hntx-9) subfamily. In terms of tissue distribution, expressed by the venom gland.

Its subcellular location is the secreted. In terms of biological role, ion channel inhibitor. The chain is Omega-theraphotoxin-Hhn1d from Cyriopagopus hainanus (Chinese bird spider).